We begin with the raw amino-acid sequence, 236 residues long: 5'-methylthioadenosine/S-adenosylhomocysteine nucleosidase (236 aa).

Glu-12 (proton acceptor) is an active-site residue. Substrate contacts are provided by residues Gly-78, Met-153, and 174–175; that span reads ME. The active-site Proton donor is the Asp-198.

Belongs to the PNP/UDP phosphorylase family. MtnN subfamily.

The enzyme catalyses S-adenosyl-L-homocysteine + H2O = S-(5-deoxy-D-ribos-5-yl)-L-homocysteine + adenine. It carries out the reaction S-methyl-5'-thioadenosine + H2O = 5-(methylsulfanyl)-D-ribose + adenine. The catalysed reaction is 5'-deoxyadenosine + H2O = 5-deoxy-D-ribose + adenine. Its pathway is amino-acid biosynthesis; L-methionine biosynthesis via salvage pathway; S-methyl-5-thio-alpha-D-ribose 1-phosphate from S-methyl-5'-thioadenosine (hydrolase route): step 1/2. Its function is as follows. Catalyzes the irreversible cleavage of the glycosidic bond in both 5'-methylthioadenosine (MTA) and S-adenosylhomocysteine (SAH/AdoHcy) to adenine and the corresponding thioribose, 5'-methylthioribose and S-ribosylhomocysteine, respectively. Also cleaves 5'-deoxyadenosine, a toxic by-product of radical S-adenosylmethionine (SAM) enzymes, into 5-deoxyribose and adenine. The chain is 5'-methylthioadenosine/S-adenosylhomocysteine nucleosidase from Geobacillus thermodenitrificans (strain NG80-2).